The chain runs to 153 residues: Ribosome maturation factor RimP (153 aa).

It belongs to the RimP family.

The protein localises to the cytoplasm. In terms of biological role, required for maturation of 30S ribosomal subunits. The chain is Ribosome maturation factor RimP from Clostridium tetani (strain Massachusetts / E88).